Reading from the N-terminus, the 216-residue chain is Probable ubiquitin-conjugating enzyme E2 ECU01_1010 (216 aa).

Residues 1–10 (MFKPSAHRRL) are compositionally biased toward basic residues. Residues 1–29 (MFKPSAHRRLPREDDIIQEDDEDGPLWPS) are disordered. Positions 29-196 (SALRRLSNEE…VIRIAREEDE (168 aa)) constitute a UBC core domain. The active-site Glycyl thioester intermediate is Cys-120.

It belongs to the ubiquitin-conjugating enzyme family.

The enzyme catalyses S-ubiquitinyl-[E1 ubiquitin-activating enzyme]-L-cysteine + [E2 ubiquitin-conjugating enzyme]-L-cysteine = [E1 ubiquitin-activating enzyme]-L-cysteine + S-ubiquitinyl-[E2 ubiquitin-conjugating enzyme]-L-cysteine.. The protein operates within protein modification; protein ubiquitination. Catalyzes the covalent attachment of ubiquitin to other proteins so as to signal them for selective protein degradation. Involved in the formation of multiubiquitin chains. This is Probable ubiquitin-conjugating enzyme E2 ECU01_1010 from Encephalitozoon cuniculi (strain GB-M1) (Microsporidian parasite).